Reading from the N-terminus, the 1066-residue chain is UPF0182 protein BL1029 (1066 aa).

Positions 12 to 74 (GNGGDSRRNN…KPASGGSGGS (63 aa)) are disordered. A compositionally biased stretch (low complexity) spans 44–61 (NAGPSGSSRPPRGPANPR). Transmembrane regions (helical) follow at residues 77–97 (SKILIGVVLALAIIVGLFFGL), 126–146 (LWVAYALLMALTGFVSAWLAI), 179–199 (VAVVISLIVGVIFGSQFNANW), 235–255 (VLAAVAMLLGVGLVFSVVTHV), 282–302 (LGIWLMLNMFAWAVRQMIGVF), 326–346 (VTFIMAALTAILGVVLGIWLM), and 372–392 (VTSIAVVVVVGLVLTVAWPVL). The disordered stretch occupies residues 977-1044 (DSGAAAGDAE…SQSAMKNGDW (68 aa)). The segment covering 989–998 (SGDQSGSDTN) has biased composition (polar residues). Residues 1003 to 1016 (GTTDGKSDSGSSSD) are compositionally biased toward low complexity.

It belongs to the UPF0182 family.

Its subcellular location is the cell membrane. The sequence is that of UPF0182 protein BL1029 from Bifidobacterium longum (strain NCC 2705).